The sequence spans 88 residues: Small ribosomal subunit protein bS18 (88 aa).

Residues M1 to V22 are disordered.

It belongs to the bacterial ribosomal protein bS18 family. As to quaternary structure, part of the 30S ribosomal subunit. Forms a tight heterodimer with protein bS6.

Functionally, binds as a heterodimer with protein bS6 to the central domain of the 16S rRNA, where it helps stabilize the platform of the 30S subunit. This is Small ribosomal subunit protein bS18 (rpsR) from Thermus thermophilus (strain ATCC BAA-163 / DSM 7039 / HB27).